The primary structure comprises 1368 residues: DNA-directed RNA polymerase subunit beta (1368 aa).

The protein belongs to the RNA polymerase beta chain family. In terms of assembly, the RNAP catalytic core consists of 2 alpha, 1 beta, 1 beta' and 1 omega subunit. When a sigma factor is associated with the core the holoenzyme is formed, which can initiate transcription.

The catalysed reaction is RNA(n) + a ribonucleoside 5'-triphosphate = RNA(n+1) + diphosphate. In terms of biological role, DNA-dependent RNA polymerase catalyzes the transcription of DNA into RNA using the four ribonucleoside triphosphates as substrates. The protein is DNA-directed RNA polymerase subunit beta of Ralstonia nicotianae (strain ATCC BAA-1114 / GMI1000) (Ralstonia solanacearum).